A 405-amino-acid polypeptide reads, in one-letter code: Arginine biosynthesis bifunctional protein ArgJ (405 aa).

The substrate site is built by threonine 152, lysine 178, threonine 189, glutamate 276, asparagine 400, and threonine 405. The active-site Nucleophile is the threonine 189.

Belongs to the ArgJ family. In terms of assembly, heterotetramer of two alpha and two beta chains.

It localises to the cytoplasm. The enzyme catalyses N(2)-acetyl-L-ornithine + L-glutamate = N-acetyl-L-glutamate + L-ornithine. It catalyses the reaction L-glutamate + acetyl-CoA = N-acetyl-L-glutamate + CoA + H(+). Its pathway is amino-acid biosynthesis; L-arginine biosynthesis; L-ornithine and N-acetyl-L-glutamate from L-glutamate and N(2)-acetyl-L-ornithine (cyclic): step 1/1. It functions in the pathway amino-acid biosynthesis; L-arginine biosynthesis; N(2)-acetyl-L-ornithine from L-glutamate: step 1/4. Its function is as follows. Catalyzes two activities which are involved in the cyclic version of arginine biosynthesis: the synthesis of N-acetylglutamate from glutamate and acetyl-CoA as the acetyl donor, and of ornithine by transacetylation between N(2)-acetylornithine and glutamate. This chain is Arginine biosynthesis bifunctional protein ArgJ, found in Pseudomonas putida (strain ATCC 47054 / DSM 6125 / CFBP 8728 / NCIMB 11950 / KT2440).